Here is a 393-residue protein sequence, read N- to C-terminus: Phosphoglycerate kinase (393 aa).

Residues 22–24 (DFN), Arg-37, 60–63 (HLGR), Arg-119, and Arg-152 contribute to the substrate site. ATP is bound by residues Lys-202, Gly-293, Glu-324, and 350 to 353 (GGDS).

It belongs to the phosphoglycerate kinase family. Monomer.

The protein localises to the cytoplasm. The catalysed reaction is (2R)-3-phosphoglycerate + ATP = (2R)-3-phospho-glyceroyl phosphate + ADP. It participates in carbohydrate degradation; glycolysis; pyruvate from D-glyceraldehyde 3-phosphate: step 2/5. The protein is Phosphoglycerate kinase of Borreliella afzelii (strain PKo) (Borrelia afzelii).